Consider the following 125-residue polypeptide: E4-ORF1 (125 aa).

The PDZ-binding signature appears at 122–125 (ATLV).

This sequence belongs to the dUTPase family. Binds to human MPDZ.

The protein resides in the host cytoplasm. The catalysed reaction is dUTP + H2O = dUMP + diphosphate + H(+). Its function is as follows. Plays a key role in virus oncogenecity in animals. Binds and sequesters human MUPP1/MPDZ protein in the cytoplasm, preventing it from playing a role in cellular proliferation regulation. Induces cell transformation, probably by inactivating MPDZ protein. The protein is E4-ORF1 (E4) of Homo sapiens (Human).